We begin with the raw amino-acid sequence, 236 residues long: Penton protein H240R (236 aa).

It belongs to the asfivirus H240R family.

Its subcellular location is the virion. Forms the penton at the fivefold vertices of the icosahedral capsid. Together with the minor capsid proteins (p17, p49, and M1249L), forms a complicated network immediately below the outer capsid shell, stabilizing the whole capsid. The polypeptide is Penton protein H240R (African swine fever virus (isolate Warthog/Namibia/Wart80/1980) (ASFV)).